The following is a 467-amino-acid chain: MSKGTLFDKVWDLHTVGTLPSGLTQLFIGLHLVHEVTSPQAFAMLRERGLKVLFPERTVATVDHIVPTENQARPFVDRLAEEMIQALEQNCQENNITFYNIGSGNQGIVHVIAPELGLTQPGMTIACGDSHTSSHGAFGAIAFGIGTSQVRDVLASQTLSLSKLKVRKIEVNGALNPGVYAKDVILHIIRTLGVKGGVGYAYEYAGTTFEQMNMEERMTVCNMAIEGGARCGYVNPDQVTYDYLQGRDFAPQGADWEKAVTWWESIKSDADAEYDDVIVFNAADIPPTVTWGITPGQGIGVNQLIPQPEELLEEDRFVAEEAYRYMDLYPGQPIKGTKIDVCFIGSCTNGRLTDLQEAAKIAKGRRVAAGVKAFVVPGSERVKKAAEAEGLDKIFEAAGFEWREPGCSMCLAMNPDKLEGRQISASSSNRNFKGRQGSASGRTLLMSPAMVATAAIQGEVADVRELL.

3 residues coordinate [4Fe-4S] cluster: Cys-347, Cys-407, and Cys-410.

This sequence belongs to the aconitase/IPM isomerase family. LeuC type 1 subfamily. In terms of assembly, heterodimer of LeuC and LeuD. [4Fe-4S] cluster is required as a cofactor.

The enzyme catalyses (2R,3S)-3-isopropylmalate = (2S)-2-isopropylmalate. The protein operates within amino-acid biosynthesis; L-leucine biosynthesis; L-leucine from 3-methyl-2-oxobutanoate: step 2/4. Catalyzes the isomerization between 2-isopropylmalate and 3-isopropylmalate, via the formation of 2-isopropylmaleate. This chain is 3-isopropylmalate dehydratase large subunit, found in Nostoc sp. (strain PCC 7120 / SAG 25.82 / UTEX 2576).